We begin with the raw amino-acid sequence, 1400 residues long: DNA-directed RNA polymerase subunit beta' (1400 aa).

Residues Cys-71, Cys-73, Cys-86, and Cys-89 each contribute to the Zn(2+) site. Mg(2+) is bound by residues Asp-462, Asp-464, and Asp-466. The Zn(2+) site is built by Cys-811, Cys-885, Cys-892, and Cys-895.

Belongs to the RNA polymerase beta' chain family. The RNAP catalytic core consists of 2 alpha, 1 beta, 1 beta' and 1 omega subunit. When a sigma factor is associated with the core the holoenzyme is formed, which can initiate transcription. Mg(2+) is required as a cofactor. Zn(2+) serves as cofactor.

The catalysed reaction is RNA(n) + a ribonucleoside 5'-triphosphate = RNA(n+1) + diphosphate. In terms of biological role, DNA-dependent RNA polymerase catalyzes the transcription of DNA into RNA using the four ribonucleoside triphosphates as substrates. The sequence is that of DNA-directed RNA polymerase subunit beta' from Brucella suis biovar 1 (strain 1330).